The sequence spans 585 residues: Arginine--tRNA ligase (585 aa).

The 'HIGH' region motif lies at 130–140 (ANPTGPMHVGH).

This sequence belongs to the class-I aminoacyl-tRNA synthetase family. Monomer.

Its subcellular location is the cytoplasm. The catalysed reaction is tRNA(Arg) + L-arginine + ATP = L-arginyl-tRNA(Arg) + AMP + diphosphate. The chain is Arginine--tRNA ligase from Methylorubrum extorquens (strain CM4 / NCIMB 13688) (Methylobacterium extorquens).